A 188-amino-acid polypeptide reads, in one-letter code: Inactive cysteine S-methyltransferase OspZ (188 aa).

It belongs to the NleE/OspZ family.

The protein localises to the secreted. It is found in the host cytoplasm. Its subcellular location is the host nucleus. In terms of biological role, inactive effector protein: in contrast to other members of the family, does not have the ability to inhibit host cell NF-kappa-B activation. Probably lacks cysteine S-methyltransferase activity due to its inability to bind S-adenosyl-L-methionine at the C-terminus. The sequence is that of Inactive cysteine S-methyltransferase OspZ from Shigella flexneri.